The chain runs to 309 residues: Ribonuclease Z (309 aa).

Zn(2+) contacts are provided by His-63, His-65, Asp-67, His-68, His-145, Asp-216, and His-274. The active-site Proton acceptor is the Asp-67.

The protein belongs to the RNase Z family. Homodimer. Zn(2+) serves as cofactor.

The enzyme catalyses Endonucleolytic cleavage of RNA, removing extra 3' nucleotides from tRNA precursor, generating 3' termini of tRNAs. A 3'-hydroxy group is left at the tRNA terminus and a 5'-phosphoryl group is left at the trailer molecule.. Zinc phosphodiesterase, which displays some tRNA 3'-processing endonuclease activity. Probably involved in tRNA maturation, by removing a 3'-trailer from precursor tRNA. This chain is Ribonuclease Z, found in Streptococcus uberis (strain ATCC BAA-854 / 0140J).